Here is a 361-residue protein sequence, read N- to C-terminus: Chorismate synthase (361 aa).

Arg48 and Arg54 together coordinate NADP(+). Residues 125 to 127 (RSS), 238 to 239 (NA), Gly278, 293 to 297 (KPTSS), and Arg319 each bind FMN.

Belongs to the chorismate synthase family. As to quaternary structure, homotetramer. FMNH2 serves as cofactor.

It carries out the reaction 5-O-(1-carboxyvinyl)-3-phosphoshikimate = chorismate + phosphate. It participates in metabolic intermediate biosynthesis; chorismate biosynthesis; chorismate from D-erythrose 4-phosphate and phosphoenolpyruvate: step 7/7. Catalyzes the anti-1,4-elimination of the C-3 phosphate and the C-6 proR hydrogen from 5-enolpyruvylshikimate-3-phosphate (EPSP) to yield chorismate, which is the branch point compound that serves as the starting substrate for the three terminal pathways of aromatic amino acid biosynthesis. This reaction introduces a second double bond into the aromatic ring system. The chain is Chorismate synthase from Methylobacillus flagellatus (strain ATCC 51484 / DSM 6875 / VKM B-1610 / KT).